A 140-amino-acid polypeptide reads, in one-letter code: Holo-[acyl-carrier-protein] synthase (140 aa).

Mg(2+) contacts are provided by Asp7 and Glu58.

It belongs to the P-Pant transferase superfamily. AcpS family. Mg(2+) serves as cofactor.

It is found in the cytoplasm. The enzyme catalyses apo-[ACP] + CoA = holo-[ACP] + adenosine 3',5'-bisphosphate + H(+). In terms of biological role, transfers the 4'-phosphopantetheine moiety from coenzyme A to a Ser of acyl-carrier-protein. The sequence is that of Holo-[acyl-carrier-protein] synthase from Chloroflexus aggregans (strain MD-66 / DSM 9485).